We begin with the raw amino-acid sequence, 185 residues long: MKTAQELRSGNVIMVGSDPLVVQKAEYNKSGRNAAVVKMKLKNLLTGAPSESVYKADDKFEVVQLDRKEVTYSYFADPMYVFMDADYEQFEVEAENMTDALKYLEDGLQCEVVFYNGKAISVELPTTVVREVVYTEPAVKGDTSGKVMKPAKIATGFELPVPAFVEIGDKIEIDTRTDEYKNRVK.

This sequence belongs to the elongation factor P family.

Its subcellular location is the cytoplasm. Its pathway is protein biosynthesis; polypeptide chain elongation. Functionally, involved in peptide bond synthesis. Stimulates efficient translation and peptide-bond synthesis on native or reconstituted 70S ribosomes in vitro. Probably functions indirectly by altering the affinity of the ribosome for aminoacyl-tRNA, thus increasing their reactivity as acceptors for peptidyl transferase. This Azoarcus sp. (strain BH72) protein is Elongation factor P.